The sequence spans 408 residues: Multifunctional CCA protein (408 aa).

Residues Gly-8 and Arg-11 each contribute to the ATP site. Positions 8 and 11 each coordinate CTP. Mg(2+) contacts are provided by Asp-21 and Asp-23. ATP is bound by residues Arg-91, Arg-137, and Arg-140. CTP contacts are provided by Arg-91, Arg-137, and Arg-140. The region spanning 228–329 is the HD domain; sequence SGVHTLMVLE…VKLFDKADFW (102 aa).

The protein belongs to the tRNA nucleotidyltransferase/poly(A) polymerase family. Bacterial CCA-adding enzyme type 1 subfamily. In terms of assembly, monomer. Can also form homodimers and oligomers. The cofactor is Mg(2+). Ni(2+) is required as a cofactor.

The catalysed reaction is a tRNA precursor + 2 CTP + ATP = a tRNA with a 3' CCA end + 3 diphosphate. The enzyme catalyses a tRNA with a 3' CCA end + 2 CTP + ATP = a tRNA with a 3' CCACCA end + 3 diphosphate. Catalyzes the addition and repair of the essential 3'-terminal CCA sequence in tRNAs without using a nucleic acid template. Adds these three nucleotides in the order of C, C, and A to the tRNA nucleotide-73, using CTP and ATP as substrates and producing inorganic pyrophosphate. tRNA 3'-terminal CCA addition is required both for tRNA processing and repair. Also involved in tRNA surveillance by mediating tandem CCA addition to generate a CCACCA at the 3' terminus of unstable tRNAs. While stable tRNAs receive only 3'-terminal CCA, unstable tRNAs are marked with CCACCA and rapidly degraded. This Shewanella piezotolerans (strain WP3 / JCM 13877) protein is Multifunctional CCA protein.